The primary structure comprises 463 residues: Cysteine--tRNA ligase (463 aa).

Residue C28 participates in Zn(2+) binding. The 'HIGH' region signature appears at 30 to 40; it reads ITPYDLCHIGH. Zn(2+) contacts are provided by C211, H236, and E240. Residues 268–272 carry the 'KMSKS' region motif; it reads KMSKS. K271 is an ATP binding site.

This sequence belongs to the class-I aminoacyl-tRNA synthetase family. As to quaternary structure, monomer. Zn(2+) is required as a cofactor.

It is found in the cytoplasm. It catalyses the reaction tRNA(Cys) + L-cysteine + ATP = L-cysteinyl-tRNA(Cys) + AMP + diphosphate. The protein is Cysteine--tRNA ligase of Wigglesworthia glossinidia brevipalpis.